The sequence spans 350 residues: uncharacterized protein (350 aa).

Basic and acidic residues predominate over residues 197-212 (KNDNSEDNRSEDDLKS). A disordered region spans residues 197-217 (KNDNSEDNRSEDDLKSSQDPV).

It localises to the plastid. The protein localises to the chloroplast. This is an uncharacterized protein from Euglena gracilis.